The chain runs to 211 residues: Ceramide-1-phosphate transfer protein (211 aa).

Positions 53, 57, 103, 107, and 147 each coordinate an N-acylsphingoid base 1-phosphate.

Belongs to the GLTP family.

Its subcellular location is the cytoplasm. It localises to the cytosol. The protein resides in the golgi apparatus. The protein localises to the trans-Golgi network membrane. It is found in the cell membrane. Its subcellular location is the endosome membrane. It localises to the nucleus outer membrane. The catalysed reaction is N-(hexadecanoyl)-sphing-4-enine-1-phosphate(in) = N-(hexadecanoyl)-sphing-4-enine-1-phosphate(out). It carries out the reaction N-(9Z-octadecenoyl)-sphing-4-enine-1-phosphate(in) = N-(9Z-octadecenoyl)-sphing-4-enine-1-phosphate(out). Functionally, mediates the intracellular transfer of ceramide-1-phosphate (C1P) between organelle membranes and the cell membrane. Required for normal structure of the Golgi stacks. Can bind phosphoceramides with a variety of aliphatic chains, but has a preference for lipids with saturated C16:0 or monounsaturated C18:1 aliphatic chains, and is inefficient with phosphoceramides containing lignoceryl (C24:0). Plays a role in the regulation of the cellular levels of ceramide-1-phosphate, and thereby contributes to the regulation of phospholipase PLA2G4A activity and the release of arachidonic acid. Has no activity with galactosylceramide, lactosylceramide, sphingomyelin, phosphatidylcholine, phosphatidic acid and ceramide. C1P transfer is stimulated by phosphatidylserine in C1P source vesicles. Regulates autophagy and pyroptosis, but not apoptosis. This is Ceramide-1-phosphate transfer protein (cptp) from Danio rerio (Zebrafish).